The following is a 66-amino-acid chain: Large ribosomal subunit protein uL29 (66 aa).

Belongs to the universal ribosomal protein uL29 family.

The protein is Large ribosomal subunit protein uL29 of Borreliella burgdorferi (strain ZS7) (Borrelia burgdorferi).